The chain runs to 390 residues: 4-O-beta-D-mannosyl-D-glucose phosphorylase (390 aa).

It belongs to the glycosyl hydrolase 130 family.

It catalyses the reaction 4-O-beta-D-mannopyranosyl-D-glucopyranose + phosphate = alpha-D-mannose 1-phosphate + D-glucose. Converts 4-O-beta-D-mannopyranosyl-D-glucopyranose (Man-Glc) to mannose 1-phosphate (Man1P) and glucose. Involved in a mannan catabolic pathway which feeds into glycolysis. This Bacteroides fragilis (strain ATCC 25285 / DSM 2151 / CCUG 4856 / JCM 11019 / LMG 10263 / NCTC 9343 / Onslow / VPI 2553 / EN-2) protein is 4-O-beta-D-mannosyl-D-glucose phosphorylase.